The primary structure comprises 301 residues: Hydroxymethylglutaryl-CoA lyase (301 aa).

The Pyruvate carboxyltransferase domain occupies Val4–Ala271. Position 12 (Arg12) interacts with substrate. Asp13, His204, and His206 together coordinate a divalent metal cation. Cys237 is an active-site residue. Asn246 contributes to the a divalent metal cation binding site.

The protein belongs to the HMG-CoA lyase family.

It carries out the reaction (3S)-3-hydroxy-3-methylglutaryl-CoA = acetoacetate + acetyl-CoA. It functions in the pathway metabolic intermediate metabolism; (S)-3-hydroxy-3-methylglutaryl-CoA degradation; acetoacetate from (S)-3-hydroxy-3-methylglutaryl-CoA: step 1/1. Involved in the catabolism of branched amino acids such as leucine. The chain is Hydroxymethylglutaryl-CoA lyase (mvaB) from Pseudomonas mevalonii.